The chain runs to 358 residues: Putative ankyrin repeat protein FPV242 (358 aa).

ANK repeat units lie at residues 6-35 (NNYR…NMIV), 40-69 (NNHT…NLVY), 91-118 (TRRN…DKGV), 119-147 (ELTG…SVEY), 149-177 (GFFP…DINK), 180-209 (CGET…DIEK), 214-243 (EQDP…SIDT), 248-277 (NHKP…NPFI), 280-312 (EGNT…RLPG), and 316-345 (YYIQ…RITS).

The sequence is that of Putative ankyrin repeat protein FPV242 from Fowlpox virus (strain NVSL) (FPV).